The following is a 452-amino-acid chain: Protoheme IX farnesyltransferase, mitochondrial (452 aa).

The N-terminal 27 residues, 1–27 (MSLVIQPLLMRALNPNLSSILISGRGF), are a transit peptide targeting the mitochondrion. Helical transmembrane passes span 152-172 (VLVMLSAICSYALSPYPATVL), 235-255 (ILWLGVNPTVAFLGFSNIALY), 267-287 (IINTWVGALVGAIPPLMGWAA), 291-311 (LSHPGAWCLAGLLYAWQFPHF), 341-361 (VALRYSLLMFPLCFGLSYFNV), 364-386 (WYYQLDSAFVNAWMSLWAFKFYF), and 417-437 (TFWVSVLHLPAVLILAILHKK).

The protein belongs to the UbiA prenyltransferase family.

The protein resides in the mitochondrion membrane. In terms of biological role, converts protoheme IX and farnesyl diphosphate to heme O. The polypeptide is Protoheme IX farnesyltransferase, mitochondrial (COX10) (Kluyveromyces lactis (strain ATCC 8585 / CBS 2359 / DSM 70799 / NBRC 1267 / NRRL Y-1140 / WM37) (Yeast)).